The following is a 188-amino-acid chain: Peptidyl-tRNA hydrolase (188 aa).

Y14 contributes to the tRNA binding site. The active-site Proton acceptor is the H19. Residues Y64, N66, and N113 each coordinate tRNA.

It belongs to the PTH family. As to quaternary structure, monomer.

It is found in the cytoplasm. It carries out the reaction an N-acyl-L-alpha-aminoacyl-tRNA + H2O = an N-acyl-L-amino acid + a tRNA + H(+). Functionally, hydrolyzes ribosome-free peptidyl-tRNAs (with 1 or more amino acids incorporated), which drop off the ribosome during protein synthesis, or as a result of ribosome stalling. Its function is as follows. Catalyzes the release of premature peptidyl moieties from peptidyl-tRNA molecules trapped in stalled 50S ribosomal subunits, and thus maintains levels of free tRNAs and 50S ribosomes. In Chloroflexus aggregans (strain MD-66 / DSM 9485), this protein is Peptidyl-tRNA hydrolase.